The following is a 453-amino-acid chain: Bifunctional protein GlmU (453 aa).

The tract at residues 1 to 225 (MNIVILAAGT…EWETLGVNSK (225 aa)) is pyrophosphorylase. UDP-N-acetyl-alpha-D-glucosamine contacts are provided by residues 6–9 (LAAG), Lys-20, Gln-71, 76–77 (GT), 98–100 (YGD), Gly-135, Glu-150, Asn-165, and Asn-223. Asp-100 is a binding site for Mg(2+). Asn-223 contacts Mg(2+). The tract at residues 226–246 (AQLAELERIHQRKLAEALLAD) is linker. The N-acetyltransferase stretch occupies residues 247-453 (GVTLADPARI…GYVRPVKKKS (207 aa)). Residues Arg-329 and Lys-347 each coordinate UDP-N-acetyl-alpha-D-glucosamine. His-359 acts as the Proton acceptor in catalysis. UDP-N-acetyl-alpha-D-glucosamine is bound by residues Tyr-362 and Asn-373. Residues Ala-376, 382 to 383 (NY), Ser-401, and Ala-419 each bind acetyl-CoA.

This sequence in the N-terminal section; belongs to the N-acetylglucosamine-1-phosphate uridyltransferase family. The protein in the C-terminal section; belongs to the transferase hexapeptide repeat family. Homotrimer. The cofactor is Mg(2+).

Its subcellular location is the cytoplasm. The catalysed reaction is alpha-D-glucosamine 1-phosphate + acetyl-CoA = N-acetyl-alpha-D-glucosamine 1-phosphate + CoA + H(+). The enzyme catalyses N-acetyl-alpha-D-glucosamine 1-phosphate + UTP + H(+) = UDP-N-acetyl-alpha-D-glucosamine + diphosphate. It participates in nucleotide-sugar biosynthesis; UDP-N-acetyl-alpha-D-glucosamine biosynthesis; N-acetyl-alpha-D-glucosamine 1-phosphate from alpha-D-glucosamine 6-phosphate (route II): step 2/2. Its pathway is nucleotide-sugar biosynthesis; UDP-N-acetyl-alpha-D-glucosamine biosynthesis; UDP-N-acetyl-alpha-D-glucosamine from N-acetyl-alpha-D-glucosamine 1-phosphate: step 1/1. The protein operates within bacterial outer membrane biogenesis; LPS lipid A biosynthesis. Catalyzes the last two sequential reactions in the de novo biosynthetic pathway for UDP-N-acetylglucosamine (UDP-GlcNAc). The C-terminal domain catalyzes the transfer of acetyl group from acetyl coenzyme A to glucosamine-1-phosphate (GlcN-1-P) to produce N-acetylglucosamine-1-phosphate (GlcNAc-1-P), which is converted into UDP-GlcNAc by the transfer of uridine 5-monophosphate (from uridine 5-triphosphate), a reaction catalyzed by the N-terminal domain. This is Bifunctional protein GlmU from Burkholderia thailandensis (strain ATCC 700388 / DSM 13276 / CCUG 48851 / CIP 106301 / E264).